The chain runs to 380 residues: Cytochrome b (380 aa).

Transmembrane regions (helical) follow at residues 34-54, 78-99, 114-134, and 179-199; these read FGSL…LLAM, WLIR…YLHI, WNVG…GYVL, and FFAL…VHLT. The heme b site is built by histidine 84 and histidine 98. Heme b-binding residues include histidine 183 and histidine 197. Position 202 (histidine 202) interacts with a ubiquinone. 4 helical membrane-spanning segments follow: residues 227–247, 289–309, 321–341, and 348–368; these read IKDI…ALFS, LGGV…PLLH, LSQI…WIGS, and FIII…VLFP.

The protein belongs to the cytochrome b family. As to quaternary structure, the cytochrome bc1 complex contains 11 subunits: 3 respiratory subunits (MT-CYB, CYC1 and UQCRFS1), 2 core proteins (UQCRC1 and UQCRC2) and 6 low-molecular weight proteins (UQCRH/QCR6, UQCRB/QCR7, UQCRQ/QCR8, UQCR10/QCR9, UQCR11/QCR10 and a cleavage product of UQCRFS1). This cytochrome bc1 complex then forms a dimer. Heme b serves as cofactor.

The protein resides in the mitochondrion inner membrane. Functionally, component of the ubiquinol-cytochrome c reductase complex (complex III or cytochrome b-c1 complex) that is part of the mitochondrial respiratory chain. The b-c1 complex mediates electron transfer from ubiquinol to cytochrome c. Contributes to the generation of a proton gradient across the mitochondrial membrane that is then used for ATP synthesis. The protein is Cytochrome b (MT-CYB) of Vireo olivaceus (Red-eyed vireo).